The primary structure comprises 60 residues: U-scutigerotoxin(02)-Tl4a (60 aa).

This sequence belongs to the scutigerotoxin-02 family. Post-translationally, contains 3 disulfide bonds. Expressed by the venom gland.

It is found in the secreted. The polypeptide is U-scutigerotoxin(02)-Tl4a (Thereuopoda longicornis (Long-legged centipede)).